A 275-amino-acid polypeptide reads, in one-letter code: Uroplakin-3b (275 aa).

Positions 1–26 (MVRTRWQPPLRALLLLVLVWLPQSLS) are cleaved as a signal peptide. Topologically, residues 27–196 (LDLIAYVPQI…DTWPGRRSGC (170 aa)) are lumenal. An N-linked (GlcNAc...) asparagine glycan is attached at Asn77. Residues 197 to 217 (MIVITSILSALAGLLLLAFLA) traverse the membrane as a helical segment. Residues 218-275 (ASTTRFSSLWWPEEAPEQLRIGSFMGKRYMTHHIPPSEAATLPVGCEPGLDPLPSLSP) lie on the Cytoplasmic side of the membrane.

This sequence belongs to the uroplakin-3 family. As to quaternary structure, heterodimer with uroplakin-1B (UPK1B). In terms of tissue distribution, expression is urothelium-specific.

The protein localises to the cell membrane. Its function is as follows. Component of the asymmetric unit membrane (AUM); a highly specialized biomembrane elaborated by terminally differentiated urothelial cells. May play an important role in AUM-cytoskeleton interaction in terminally differentiated urothelial cells. It also contributes to the formation of urothelial glycocalyx which may play an important role in preventing bacterial adherence. In Mus musculus (Mouse), this protein is Uroplakin-3b (Upk3b).